We begin with the raw amino-acid sequence, 214 residues long: Acyl-homoserine-lactone synthase (214 aa).

It belongs to the autoinducer synthase family.

It catalyses the reaction a fatty acyl-[ACP] + S-adenosyl-L-methionine = an N-acyl-L-homoserine lactone + S-methyl-5'-thioadenosine + holo-[ACP] + H(+). Functionally, required for the synthesis of autoinducer molecules such as OHHL (N-(3-oxohexanoyl)-L-homoserine lactone), and HHL (N-hexanoyl-L-homoserine lactone). The protein is Acyl-homoserine-lactone synthase (yenI) of Yersinia enterocolitica.